The sequence spans 340 residues: Solute carrier family 35 member G3 (340 aa).

Residues 11–33 form a disordered region; that stretch reads PDFTQPSPPSTPASLPSKHHHRC. Transmembrane regions (helical) follow at residues 39 to 59, 69 to 89, 107 to 127, 160 to 180, 189 to 209, 223 to 243, 257 to 277, 283 to 303, and 307 to 327; these read TKGLFVALLGGGLSAGFVGPF, LPSLELLIFRCLFHLPIALLL, FLHAILNVLSIGCAYSAVQVV, AWCGLFGSTLGLIIIVGPGLG, LYTALGYVLAFLGGLALSLGL, TVAFLFGLVGLMVSVPGLFVL, CVVAVGLLALVSFVCVSYAVT, LVCAVLHSEVVVALMLQYYVL, and VAPSDIMGAGVVLGSIAIITA. The EamA 1 domain occupies 51–176; that stretch reads LSAGFVGPFS…STLGLIIIVG (126 aa). Positions 274–327 constitute an EamA 2 domain; sequence YAVTKAHPALVCAVLHSEVVVALMLQYYVLYETVAPSDIMGAGVVLGSIAIITA.

It belongs to the SLC35G solute transporter family.

The protein localises to the membrane. In Mus musculus (Mouse), this protein is Solute carrier family 35 member G3 (Slc35g3).